The sequence spans 673 residues: Probable boron transporter 7 (673 aa).

The Cytoplasmic portion of the chain corresponds to 1 to 35 (MEGVKFPFGGIINDFNGRRKCYKQDWLAAFNSGVR). A helical transmembrane segment spans residues 36–56 (ILAPTLYIFIASALPVIAFGE). Residues 57-75 (QLSRETDRSLGIAESLAST) lie on the Extracellular side of the membrane. Residues 76 to 96 (ALCGIIHSVFGGQPLLIVGVA) traverse the membrane as a helical segment. Residues 97-121 (EPTIIMYTYLHSFSKSRPELGQKLY) lie on the Cytoplasmic side of the membrane. A helical membrane pass occupies residues 122–142 (LAWAGWVCVWTAVLLMLLAML). The Extracellular segment spans residues 143–160 (NACNIISRFTRIAGELFG). Residues 161–181 (MLITVLFIQEAVKGLIGEFLV) traverse the membrane as a helical segment. Residues 182–197 (PKSDDPSLEVYQFQWR) are Cytoplasmic-facing. Residues 198–218 (YTNGLLAVIFSFGLLYTALKS) form a helical membrane-spanning segment. Over 219 to 233 (RRARSWKYGFRWMRG) the chain is Extracellular. Residues 234-254 (FIGDYGTLLMLVLWSAFSYTV) form a helical membrane-spanning segment. Residues 255 to 289 (PRNLPEGVPRRLELPLPWASESLYHWTVVKDMAKV) lie on the Cytoplasmic side of the membrane. Residues 290 to 310 (PPLYILAAFIPAIMIAGLYFF) form a helical membrane-spanning segment. The Extracellular portion of the chain corresponds to 311–330 (DHCVSAQMAQQKEFNLKNPT). The chain crosses the membrane as a helical span at residues 331–351 (AYHYDIFILGIMTLICGLLGL). Residues 352-468 (PPSNGVIPQS…EQRVSNLLQS (117 aa)) are Cytoplasmic-facing. A helical transmembrane segment spans residues 469–489 (VLVGLLILAVPVLRMIPTSVL). Residues 490–556 (WGYFTYMAVD…QLLYFLICYG (67 aa)) lie on the Extracellular side of the membrane. A helical transmembrane segment spans residues 557–577 (VTWIPVGGILFPLPFFILIAL). The Cytoplasmic segment spans residues 578–673 (RQYILQRLFD…SQMVKIYNHS (96 aa)).

The protein belongs to the anion exchanger (TC 2.A.31.3) family.

Its subcellular location is the membrane. Functionally, putative boron transporter. Boron is essential for maintaining the integrity of plants cell walls. The protein is Probable boron transporter 7 (BOR7) of Arabidopsis thaliana (Mouse-ear cress).